A 288-amino-acid chain; its full sequence is Large ribosomal subunit protein uL2 (288 aa).

2 disordered regions span residues 1–46 (MAIH…RNVY) and 226–288 (MVMN…RGKK). Residues 235–248 (NGGGQGKSKGGGGR) show a composition bias toward gly residues. Residues 279–288 (HNGRKPRGKK) are compositionally biased toward basic residues.

Belongs to the universal ribosomal protein uL2 family. Part of the 50S ribosomal subunit. Forms a bridge to the 30S subunit in the 70S ribosome.

One of the primary rRNA binding proteins. Required for association of the 30S and 50S subunits to form the 70S ribosome, for tRNA binding and peptide bond formation. It has been suggested to have peptidyltransferase activity; this is somewhat controversial. Makes several contacts with the 16S rRNA in the 70S ribosome. In Opitutus terrae (strain DSM 11246 / JCM 15787 / PB90-1), this protein is Large ribosomal subunit protein uL2.